Consider the following 593-residue polypeptide: Aspartate--tRNA ligase (593 aa).

Position 180 (Glu-180) interacts with L-aspartate. The segment at 204–207 is aspartate; it reads QIFK. L-aspartate is bound at residue Arg-226. ATP contacts are provided by residues 226–228 and Gln-235; that span reads RDE. His-453 lines the L-aspartate pocket. Glu-487 contributes to the ATP binding site. L-aspartate is bound at residue Arg-494. 539–542 is an ATP binding site; sequence GLDR.

This sequence belongs to the class-II aminoacyl-tRNA synthetase family. Type 1 subfamily. In terms of assembly, homodimer.

The protein localises to the cytoplasm. The catalysed reaction is tRNA(Asp) + L-aspartate + ATP = L-aspartyl-tRNA(Asp) + AMP + diphosphate. In terms of biological role, catalyzes the attachment of L-aspartate to tRNA(Asp) in a two-step reaction: L-aspartate is first activated by ATP to form Asp-AMP and then transferred to the acceptor end of tRNA(Asp). This is Aspartate--tRNA ligase from Clostridium botulinum (strain ATCC 19397 / Type A).